Here is a 427-residue protein sequence, read N- to C-terminus: Isoprenylcysteine alpha-carbonyl methylesterase ICME (427 aa).

The segment at 26 to 59 is disordered; sequence EVLPDEDSDRTTLLNGEPLRRRVSGKSPVDEGPR. 2 consecutive transmembrane segments (helical) span residues 102–122 and 157–177; these read LLAL…VAYS and VVVF…GSLL. Substrate is bound by residues 163-165 and 234-236; these read GGA and QSA. Active-site residues include Ser-235, Asp-336, and His-368.

Belongs to the AB hydrolase superfamily. Isoprenylcysteine methylesterase family. As to expression, expressed in roots, rosette and cauline leaves, stems, flowers and siliques.

Its subcellular location is the endoplasmic reticulum membrane. It is found in the golgi apparatus membrane. The enzyme catalyses [protein]-C-terminal S-[(2E,6E)-farnesyl]-L-cysteine methyl ester + H2O = [protein]-C-terminal S-[(2E,6E)-farnesyl]-L-cysteine + methanol + H(+). Functionally, catalyzes the demethylation of isoprenylcysteine methylesters. In vitro, is specific for N-acetyl-S-farnesyl-L-cysteine methyl ester (AFCme) and has low activity toward N-acetyl-S-geranyl-L-cysteine methyl ester (AGCme). Acts as a positive regulator of ABA signaling. May be involved in the demethylation and inactivation of isoprenylated negative regulators of abscisic acid (ABA) signaling. Carboxyl methylation is a reversible and potentially regulated step in the post-translational modification of prenylated proteins. This Arabidopsis thaliana (Mouse-ear cress) protein is Isoprenylcysteine alpha-carbonyl methylesterase ICME.